A 560-amino-acid polypeptide reads, in one-letter code: Potassium-transporting ATPase potassium-binding subunit (560 aa).

12 helical membrane passes run 6 to 26 (FLLIASFLLVLMALAKPLGSL), 63 to 83 (LLAILLFNTLGLVLLFAILMC), 132 to 152 (GLAVQNFLSAATGIAVAFALI), 175 to 195 (LWVLMPISLIIALFFIQQGAI), 250 to 270 (LTNVVQMLAIFLIPAALCFAF), 282 to 302 (AILWTMTVIFVVCVALVMWAE), 327 to 347 (FGILASSLFAVVTTAASCGAV), 356 to 376 (ALGGMIPMWLMQIGEVVFGGV), 379 to 399 (GLYGMLLFVLLGVFIAGLMIG), 416 to 436 (MTALAILVTPALVLLGTALAM), 483 to 503 (LLLAFCMWFGRFLVIIPVMAI), and 524 to 544 (GALFIGLLTGTVLLVGALTFI).

The protein belongs to the KdpA family. In terms of assembly, the system is composed of three essential subunits: KdpA, KdpB and KdpC.

The protein resides in the cell inner membrane. Functionally, part of the high-affinity ATP-driven potassium transport (or Kdp) system, which catalyzes the hydrolysis of ATP coupled with the electrogenic transport of potassium into the cytoplasm. This subunit binds the periplasmic potassium ions and delivers the ions to the membrane domain of KdpB through an intramembrane tunnel. The protein is Potassium-transporting ATPase potassium-binding subunit of Cronobacter sakazakii (strain ATCC BAA-894) (Enterobacter sakazakii).